The primary structure comprises 679 residues: Glycine--tRNA ligase beta subunit (679 aa).

Belongs to the class-II aminoacyl-tRNA synthetase family. Tetramer of two alpha and two beta subunits.

It is found in the cytoplasm. It catalyses the reaction tRNA(Gly) + glycine + ATP = glycyl-tRNA(Gly) + AMP + diphosphate. In Streptococcus pyogenes serotype M2 (strain MGAS10270), this protein is Glycine--tRNA ligase beta subunit.